The chain runs to 147 residues: Protein phosphatase 1 regulatory subunit 14B (147 aa).

The span at 1-15 (MADSGPAGGAALAAP) shows a compositional bias: low complexity. The disordered stretch occupies residues 1–55 (MADSGPAGGAALAAPAPGPGSGSTGPRVYFQSPPGAAGEGPGGADDDGPVRRQGK). Ala2 bears the N-acetylalanine mark. Position 21 is a phosphoserine (Ser21). Tyr29 carries the post-translational modification Phosphotyrosine. A Phosphoserine modification is found at Ser32. Thr57 is modified (phosphothreonine). Residues 61–103 (DRKELRKRLNLEEWILEQLTRLYDCQEEEIPELEIDVDELLDM) are a coiled coil.

This sequence belongs to the PP1 inhibitor family. In terms of processing, phosphorylated primarily on Thr-57 by PKC (in vitro). An unknown Ser is also phosphorylated by PKC (in vitro). As to expression, ubiquitous. Highly expressed in testis. Detected at low levels in the other tissues tested. Highly expressed in cardiac muscle, bladder and aorta (at protein level).

The protein resides in the cytoplasm. Functionally, inhibitor of PPP1CA. Has over 50-fold higher inhibitory activity when phosphorylated. This chain is Protein phosphatase 1 regulatory subunit 14B (Ppp1r14b), found in Mus musculus (Mouse).